We begin with the raw amino-acid sequence, 90 residues long: Neuropeptide F (90 aa).

The N-terminal stretch at 1–27 (MTFSTSSSFSRRALVALLVCTLLIDLS) is a signal peptide. The interval 54–90 (KHAQHARPRFGKRSYLNPAGYGQDEQEDDWQDSTFTR) is disordered. A compositionally biased stretch (basic residues) spans 56–65 (AQHARPRFGK). F63 bears the Phenylalanine amide mark. A propeptide spanning residues 67-90 (SYLNPAGYGQDEQEDDWQDSTFTR) is cleaved from the precursor.

The protein belongs to the NPY family. In terms of tissue distribution, expressed in hemolymph, brain and midgut.

Its subcellular location is the secreted. In terms of biological role, an integral part of the sensory system that mediates food signaling, providing the neural basis for the regulation of food response; coordinates larval foraging and social behavior changes during development. May have a hormonal role in females. This chain is Neuropeptide F (npf), found in Aedes aegypti (Yellowfever mosquito).